Reading from the N-terminus, the 59-residue chain is Large ribosomal subunit protein bL32 (59 aa).

The segment at 1–25 (MAVQQNKKSPSKRGMHRSHDFLNAA) is disordered.

It belongs to the bacterial ribosomal protein bL32 family.

This is Large ribosomal subunit protein bL32 from Paraburkholderia phymatum (strain DSM 17167 / CIP 108236 / LMG 21445 / STM815) (Burkholderia phymatum).